The primary structure comprises 160 residues: Small ribosomal subunit protein bS6 (160 aa).

A disordered region spans residues 100-160 (PSSVLARKSD…DDARETAGAE (61 aa)). 2 stretches are compositionally biased toward basic and acidic residues: residues 106 to 116 (RKSDDRGDRGN) and 136 to 160 (RSSEDREEYRARGEQDDARETAGAE).

Belongs to the bacterial ribosomal protein bS6 family.

Binds together with bS18 to 16S ribosomal RNA. The polypeptide is Small ribosomal subunit protein bS6 (Gluconobacter oxydans (strain 621H) (Gluconobacter suboxydans)).